A 316-amino-acid polypeptide reads, in one-letter code: Olfactory receptor 2H1 (316 aa).

Topologically, residues 1-23 (MVNQSSPMGFLLLGFSEHPALER) are extracellular. An N-linked (GlcNAc...) asparagine glycan is attached at Asn3. Residues 24–47 (TLFVVVFTSYLLTLVGNTLIILLS) traverse the membrane as a helical segment. The Cytoplasmic segment spans residues 48–55 (VLYPRLHS). The helical transmembrane segment at 56–77 (PMYFFLSDLSFLDLCFTTSCVP) threads the bilayer. The Extracellular segment spans residues 78 to 98 (QMLVNLWGPKKTISFLGCSVQ). Residues Cys95 and Cys187 are joined by a disulfide bond. A helical transmembrane segment spans residues 99–118 (LFIFLSLGTTECILLTVMAF). Over 119–137 (DRYVAVCQPLHYATIIHPR) the chain is Cytoplasmic. The chain crosses the membrane as a helical span at residues 138–156 (LCWQLASVAWVMSLVQSIV). The Extracellular segment spans residues 157–193 (QTPSTLHLPFCPHQQIDDFLCEVPSLIRLSCGDTSYN). A helical membrane pass occupies residues 194–217 (EIQLAVSSVIFVVVPLSLILASYG). Residues 218–234 (ATAQAVLRINSATAWRK) are Cytoplasmic-facing. Residues 235-257 (AFGTCSSHLTVVTLFYSSVIAVY) traverse the membrane as a helical segment. Over 258–270 (LQPKNPYAQGRGK) the chain is Extracellular. The helical transmembrane segment at 271 to 290 (FFGLFYAVGTPSLNPLVYTL) threads the bilayer. Residues 291 to 316 (RNKEIKRALRRLLGKERDSRESWRAA) are Cytoplasmic-facing.

Belongs to the G-protein coupled receptor 1 family.

The protein localises to the cell membrane. Odorant receptor. The chain is Olfactory receptor 2H1 (OR2H1) from Homo sapiens (Human).